The primary structure comprises 273 residues: Phosphatidylglycerol--prolipoprotein diacylglyceryl transferase (273 aa).

The next 7 membrane-spanning stretches (helical) occupy residues 21 to 41, 60 to 80, 95 to 115, 124 to 144, 176 to 196, 203 to 223, and 237 to 257; these read VSVRWYGLMYLVGFMFALWLA, LLFAGFLGVVIGGRVGYVIFY, VWTGGMSFHGGLLGVITAMFW, FFGVADFVAPLVPFGLGMGRM, SQLYEMFLEGIVLFFILNWFI, GAVSGLFLAGYGTFRFLVEFV, and ISMGQILSSPMIILGILMMVW. Residue Arg143 coordinates a 1,2-diacyl-sn-glycero-3-phospho-(1'-sn-glycerol).

The protein belongs to the Lgt family.

Its subcellular location is the cell inner membrane. The catalysed reaction is L-cysteinyl-[prolipoprotein] + a 1,2-diacyl-sn-glycero-3-phospho-(1'-sn-glycerol) = an S-1,2-diacyl-sn-glyceryl-L-cysteinyl-[prolipoprotein] + sn-glycerol 1-phosphate + H(+). The protein operates within protein modification; lipoprotein biosynthesis (diacylglyceryl transfer). In terms of biological role, catalyzes the transfer of the diacylglyceryl group from phosphatidylglycerol to the sulfhydryl group of the N-terminal cysteine of a prolipoprotein, the first step in the formation of mature lipoproteins. The sequence is that of Phosphatidylglycerol--prolipoprotein diacylglyceryl transferase from Vibrio campbellii (strain ATCC BAA-1116).